Reading from the N-terminus, the 336-residue chain is Mitochondrial import receptor subunit TOM40 homolog (336 aa).

Positions 1-58 are disordered; sequence MGNVLAASSPAPPAAGSPPAPGLVSVPPGFTMPPVAGLTPTPDKKETQEDRLPNPGTF. Residues 10–21 are compositionally biased toward pro residues; that stretch reads PAPPAAGSPPAP. A compositionally biased stretch (basic and acidic residues) spans 42–52; that stretch reads PDKKETQEDRL.

It belongs to the Tom40 family. In terms of assembly, forms part of the preprotein translocase complex of the outer mitochondrial membrane (TOM complex). Interacts with mitochondrial targeting sequences.

The protein resides in the mitochondrion outer membrane. Channel-forming protein essential for import of protein precursors into mitochondria. In Xenopus tropicalis (Western clawed frog), this protein is Mitochondrial import receptor subunit TOM40 homolog (tomm40).